The chain runs to 491 residues: Ketol-acid reductoisomerase (NADP(+)) (491 aa).

A KARI N-terminal Rossmann domain is found at 14–208 (LDQLGRCRFM…GGHRAGVLES (195 aa)). Residues 45 to 48 (CGAQ), arginine 68, arginine 76, serine 78, and 108 to 110 (DKQ) each bind NADP(+). Residue histidine 132 is part of the active site. Glycine 158 contacts NADP(+). 2 KARI C-terminal knotted domains span residues 209–344 (SFVA…NAPK) and 345–485 (YEGK…MTDM). 4 residues coordinate Mg(2+): aspartate 217, glutamate 221, glutamate 389, and glutamate 393. A substrate-binding site is contributed by serine 414.

This sequence belongs to the ketol-acid reductoisomerase family. Mg(2+) is required as a cofactor.

The catalysed reaction is (2R)-2,3-dihydroxy-3-methylbutanoate + NADP(+) = (2S)-2-acetolactate + NADPH + H(+). The enzyme catalyses (2R,3R)-2,3-dihydroxy-3-methylpentanoate + NADP(+) = (S)-2-ethyl-2-hydroxy-3-oxobutanoate + NADPH + H(+). It functions in the pathway amino-acid biosynthesis; L-isoleucine biosynthesis; L-isoleucine from 2-oxobutanoate: step 2/4. Its pathway is amino-acid biosynthesis; L-valine biosynthesis; L-valine from pyruvate: step 2/4. In terms of biological role, involved in the biosynthesis of branched-chain amino acids (BCAA). Catalyzes an alkyl-migration followed by a ketol-acid reduction of (S)-2-acetolactate (S2AL) to yield (R)-2,3-dihydroxy-isovalerate. In the isomerase reaction, S2AL is rearranged via a Mg-dependent methyl migration to produce 3-hydroxy-3-methyl-2-ketobutyrate (HMKB). In the reductase reaction, this 2-ketoacid undergoes a metal-dependent reduction by NADPH to yield (R)-2,3-dihydroxy-isovalerate. In Pasteurella multocida (strain Pm70), this protein is Ketol-acid reductoisomerase (NADP(+)).